A 140-amino-acid chain; its full sequence is N14 matrix protein (140 aa).

The N-terminal stretch at 1–25 (MACTLRLTIAALVLLGICHLSRPVA) is a signal peptide.

The protein belongs to the N16 matrix protein family. In terms of assembly, heterooligomer; disulfide-linked. Pif97, Pif80, N16 and other proteins form a complex. As to expression, component of conchiolin, the organic matrix of nacre. Only expressed in the dorsal region of the mantle.

Its subcellular location is the secreted. It localises to the extracellular space. The protein localises to the extracellular matrix. Functionally, may be specifically involved in the formation of the nacreous layer. The chain is N14 matrix protein from Pinctada maxima (Silver-lipped pearl oyster).